Consider the following 1024-residue polypeptide: MTMITDSLAVVLQRRDWENPGVTQLNRLAAHPPFASWRNSEEARTNRPSQQLRSLNGEWQFVWFPAPEAVPESWLECDLPDADTVVVPSNWQMHGYDAPIYTNVTYPITVNPPFVPTENPTGCYSLTFNVDESWLQEGQTRIIFDGVNSAFHLWCNGRWVGYGQDSRLLSEFDLSAFLRAGENRLAVMVLRWSDGSYLEDQDMWRMSGIFRDVSLLHKPTTQISDFHVATLFNDDFSRAVLEAEVQMYGELRDELRVTVSLWQGETQVASGTAPFGGEIIDERGGYADRVTLGLNVENPKLWSAEIPNIYRAVVELHTADGTLIEAEACDVGFREVRIENGLLLLNGKPLLIRGVNRHEHHPLHGQVMDEQTMVQDILLMKQNNFNAVRCSHYPNHPLWYTLCDRYGLYVVDEANIETHGMVPMNRLTDDPRWLPAMSERVTRMVQRDRNHPSVIIWSLGNESGHGANHDALYRWIKSVDPSRPVQYEGGGADTSATDIICPMYARVDEDQPFPAVPKWSIKKWLSLPGEMRPLILCEYAHAMGNSLGGFAKYWQAFRQYPRLQGGFVWDLVDQSLIKYDENGNPWSAYGGDFGDTPNDRQFCMNGLVFADRTPHPALTEAKHQQQFFQFRLSGRTIEVTSEYLFRHSDNELLHWTVALDGKPLASGEVPLDVAPQGKQVIELPELPRLESTGQLWLTVHVVQPNATAWSEAGHISAWQQWRLAENLSVTLPSAPHAIPQLTTSETDFCIELDNKRWQFNRQSGFLSQMWIGDKKQLLTPLRDQFTRAPLDNDIGVSEATRIDPNAWVERWKAAGHYQAEAALLQCTADTLADAVLITTVHAWQHQGKTLFISRKTYRIDGSGQMAITVDVEVASDTPHPARIGLTCQLAQVAERVNWLGLGPQENYPDRLTAACFDRWDLPLSDMYTPYVFPSENGLRCGTRELNYGPHQWRGDFQFNISRYSQQQLMETSHRHLLHAEEGTWLNIDGFHMGIGGDDSWSPSVSAEFQLSAGRYHYQLVWCQK.

Substrate is bound by residues asparagine 103 and aspartate 202. A Na(+)-binding site is contributed by aspartate 202. Glutamate 417, histidine 419, and glutamate 462 together coordinate Mg(2+). Substrate-binding positions include glutamate 462 and 538-541; that span reads EYAH. Glutamate 462 (proton donor) is an active-site residue. Glutamate 538 functions as the Nucleophile in the catalytic mechanism. Position 598 (asparagine 598) interacts with Mg(2+). Residues phenylalanine 602 and asparagine 605 each contribute to the Na(+) site. Residues asparagine 605 and tryptophan 1000 each contribute to the substrate site.

Belongs to the glycosyl hydrolase 2 family. In terms of assembly, homotetramer. Mg(2+) serves as cofactor. The cofactor is Na(+).

It carries out the reaction Hydrolysis of terminal non-reducing beta-D-galactose residues in beta-D-galactosides.. The polypeptide is Beta-galactosidase (Escherichia coli O157:H7).